The following is a 57-amino-acid chain: Potassium channel toxin alpha-KTx 8.5 (57 aa).

The N-terminal stretch at 1 to 28 is a signal peptide; the sequence is MSRLYAIILIALVLNVIMTIMPDSKVEA. 3 disulfide bridges follow: Cys31/Cys47, Cys34/Cys52, and Cys38/Cys54.

Belongs to the short scorpion toxin superfamily. Potassium channel inhibitor family. Alpha-KTx 08 subfamily. In terms of tissue distribution, expressed by the venom gland.

The protein localises to the secreted. Functionally, selectively inhibits voltage-gated potassium channels Kv1.2/KCNA2 (IC(50)=183 nM). This is Potassium channel toxin alpha-KTx 8.5 from Odontobuthus doriae (Yellow Iranian scorpion).